We begin with the raw amino-acid sequence, 152 residues long: Ribosome maturation factor RimP (152 aa).

This sequence belongs to the RimP family.

It localises to the cytoplasm. In terms of biological role, required for maturation of 30S ribosomal subunits. The chain is Ribosome maturation factor RimP from Elusimicrobium minutum (strain Pei191).